Reading from the N-terminus, the 349-residue chain is tRNA pseudouridine synthase D (349 aa).

Phenylalanine 27 provides a ligand contact to substrate. The active-site Nucleophile is the aspartate 80. Asparagine 129 is a binding site for substrate. A TRUD domain is found at 155–303 (GVPNYFGAQR…VEASRRAMLL (149 aa)). A substrate-binding site is contributed by phenylalanine 329.

Belongs to the pseudouridine synthase TruD family.

It catalyses the reaction uridine(13) in tRNA = pseudouridine(13) in tRNA. In terms of biological role, responsible for synthesis of pseudouridine from uracil-13 in transfer RNAs. The polypeptide is tRNA pseudouridine synthase D (Salmonella typhi).